A 624-amino-acid chain; its full sequence is Steryl-sulfatase (624 aa).

The first 22 residues, 1 to 22 (MPRPRPLLLAVMAATLADIILA), serve as a signal peptide directing secretion. The Lumenal segment spans residues 24 to 192 (DPAPAGPAPR…GTVFGPALRV (169 aa)). Aspartate 43 and aspartate 44 together coordinate Ca(2+). An N-linked (GlcNAc...) asparagine glycan is attached at asparagine 55. Cysteine 83 contributes to the Ca(2+) binding site. Cysteine 83 acts as the Nucleophile in catalysis. At cysteine 83 the chain carries 3-oxoalanine (Cys). The active site involves histidine 144. 2 cysteine pairs are disulfide-bonded: cysteine 149/cysteine 156 and cysteine 178/cysteine 250. Residues 193-216 (FAAGPLAALGASLAAMAAARWAGL) traverse the membrane as a helical segment. The Cytoplasmic portion of the chain corresponds to 217-220 (ARVP). Residues 221-242 (GWALAGTAAAMLAVGGPRSASC) traverse the membrane as a helical segment. At 243-624 (LGFRPANCFL…ATTRTQATPR (382 aa)) the chain is on the lumenal side. Positions 350 and 351 each coordinate Ca(2+). Cystine bridges form between cysteine 454–cysteine 495 and cysteine 487–cysteine 493. A glycan (N-linked (GlcNAc...) asparagine) is linked at asparagine 465. Residues 572–624 (GGAGGGAGAQDDSGHAHGDGSHAHDDPGHAQDRGDDDAHYGGHATTRTQATPR) form a disordered region. The segment covering 583–611 (DSGHAHGDGSHAHDDPGHAQDRGDDDAHY) has biased composition (basic and acidic residues).

It belongs to the sulfatase family. As to quaternary structure, homodimer. It depends on Ca(2+) as a cofactor. Post-translationally, the conversion to 3-oxoalanine (also known as C-formylglycine, FGly), of a serine or cysteine residue in prokaryotes and of a cysteine residue in eukaryotes, is critical for catalytic activity.

Its subcellular location is the microsome membrane. It localises to the endoplasmic reticulum membrane. It catalyses the reaction dehydroepiandrosterone 3-sulfate + H2O = 3beta-hydroxyandrost-5-en-17-one + sulfate + H(+). It carries out the reaction estrone 3-sulfate + H2O = estrone + sulfate + H(+). Catalyzes the conversion of sulfated steroid precursors, such as dehydroepiandrosterone sulfate (DHEA-S) and estrone sulfate to the free steroid. The chain is Steryl-sulfatase (Sts) from Mus musculus (Mouse).